The chain runs to 473 residues: T-box transcription factor TBX6L (473 aa).

The T-box DNA-binding region spans 43 to 217 (LWDKFSSIGT…NNPFAKGFRD (175 aa)). Positions 342 to 361 (RLNPQETHHNSRPKIQLQPP) are disordered.

Exclusively expressed by ventral mesendoderm.

It is found in the nucleus. In terms of biological role, probable transcriptional regulator involved in developmental processes. The protein is T-box transcription factor TBX6L (tbx6l) of Danio rerio (Zebrafish).